Reading from the N-terminus, the 286-residue chain is 3-amino-tetrahydro-pyrrolizinone reductase (286 aa).

Tyr146 functions as the Proton acceptor in the catalytic mechanism.

Belongs to the short-chain dehydrogenases/reductases (SDR) family.

It catalyses the reaction 3-amino-5,6,7,7a-tetrahydro-1H-pyrrolizin-1-one + AH2 = 3-amino-tetrahydro-1H-pyrrolizin-1-ol + A. Functionally, involved in the biosynthetic pathway of pyrrolizwilline, a pyrrolizidine alkaloid. Catalyzes the reduction of 3-amino-tetrahydro-pyrrolizinone to 3-amino-tetrahydro-pyrrolizinol. The polypeptide is 3-amino-tetrahydro-pyrrolizinone reductase (xhpD) (Xenorhabdus hominickii).